A 158-amino-acid polypeptide reads, in one-letter code: Small ribosomal subunit protein uS7 (158 aa).

Belongs to the universal ribosomal protein uS7 family. As to quaternary structure, part of the 30S ribosomal subunit. Contacts proteins S9 and S11.

One of the primary rRNA binding proteins, it binds directly to 16S rRNA where it nucleates assembly of the head domain of the 30S subunit. Is located at the subunit interface close to the decoding center, probably blocks exit of the E-site tRNA. The polypeptide is Small ribosomal subunit protein uS7 (Bacteroides fragilis (strain YCH46)).